The primary structure comprises 501 residues: Glutamate--tRNA ligase (501 aa).

The 'HIGH' region motif lies at 21–31 (PSPTGTPHVGL). The 'KMSKS' region signature appears at 266–270 (KLSKR). Lys269 is a binding site for ATP.

It belongs to the class-I aminoacyl-tRNA synthetase family. Glutamate--tRNA ligase type 1 subfamily. In terms of assembly, monomer.

It is found in the cytoplasm. The enzyme catalyses tRNA(Glu) + L-glutamate + ATP = L-glutamyl-tRNA(Glu) + AMP + diphosphate. Its function is as follows. Catalyzes the attachment of glutamate to tRNA(Glu) in a two-step reaction: glutamate is first activated by ATP to form Glu-AMP and then transferred to the acceptor end of tRNA(Glu). The polypeptide is Glutamate--tRNA ligase (Kineococcus radiotolerans (strain ATCC BAA-149 / DSM 14245 / SRS30216)).